Consider the following 122-residue polypeptide: Sarcocystatin-A (122 aa).

The signal sequence occupies residues 1 to 20 (MKYVLILCVITLATVAYAQP). Gln-21 carries the pyrrolidone carboxylic acid modification. Positions 67 to 71 (QVVSG) match the Secondary area of contact motif.

The protein belongs to the cystatin family.

Functionally, selectively inhibits the activity of cysteine proteinase of hemocytes, protecting developing adult tissue in pupae from attack by the proteinase. The chain is Sarcocystatin-A from Sarcophaga peregrina (Flesh fly).